A 342-amino-acid chain; its full sequence is 11-beta-hydroxysteroid dehydrogenase-like 6 (342 aa).

The helical; Signal-anchor for type II membrane protein transmembrane segment at 10-30 threads the bilayer; it reads FLFPLLTLYALLVFYPTYQRL. NADP(+) is bound by residues 54–80 and aspartate 105; that span reads GAAS…VDIR. Serine 184 provides a ligand contact to substrate. Tyrosine 197 acts as the Proton acceptor in catalysis. Residues 197-201 and lysine 201 contribute to the NADP(+) site; that span reads YCASK.

This sequence belongs to the short-chain dehydrogenases/reductases (SDR) family.

The protein resides in the membrane. The chain is 11-beta-hydroxysteroid dehydrogenase-like 6 (HSD6) from Arabidopsis thaliana (Mouse-ear cress).